A 351-amino-acid polypeptide reads, in one-letter code: Methylthioribose-1-phosphate isomerase (351 aa).

Residues 51-53 (RGA), R94, and Q199 contribute to the substrate site. Residue D240 is the Proton donor of the active site. Position 250-251 (250-251 (NK)) interacts with substrate.

It belongs to the EIF-2B alpha/beta/delta subunits family. MtnA subfamily. In terms of assembly, homodimer.

The catalysed reaction is 5-(methylsulfanyl)-alpha-D-ribose 1-phosphate = 5-(methylsulfanyl)-D-ribulose 1-phosphate. The protein operates within amino-acid biosynthesis; L-methionine biosynthesis via salvage pathway; L-methionine from S-methyl-5-thio-alpha-D-ribose 1-phosphate: step 1/6. Its function is as follows. Catalyzes the interconversion of methylthioribose-1-phosphate (MTR-1-P) into methylthioribulose-1-phosphate (MTRu-1-P). The polypeptide is Methylthioribose-1-phosphate isomerase (Bacillus thuringiensis (strain Al Hakam)).